A 479-amino-acid chain; its full sequence is Leucine-rich repeat-containing protein 74A (479 aa).

Residues 1–10 (MDDDDIEPLE) show a composition bias toward acidic residues. Positions 1–29 (MDDDDIEPLEYETKDETEAALAPQSSEDT) are disordered. LRR repeat units lie at residues 119–140 (TVLK…SLME), 147–167 (YLQE…RIIS), 176–197 (SLWK…LLCQ), 204–225 (RIRS…YLGQ), 232–253 (GLQS…ALCN), 260–281 (TLKK…ALGD), 288–309 (CLVY…RISK), and 316–336 (CLQV…YSLI).

The protein is Leucine-rich repeat-containing protein 74A of Rattus norvegicus (Rat).